The sequence spans 137 residues: Basic phospholipase A2 DsM-S1 (137 aa).

The first 16 residues, 1–16 (MRTLWIVAVCLIGVEG), serve as a signal peptide directing secretion. Disulfide bonds link Cys-42–Cys-131, Cys-44–Cys-60, Cys-59–Cys-111, Cys-65–Cys-137, Cys-66–Cys-104, Cys-73–Cys-97, and Cys-91–Cys-102. Ca(2+) contacts are provided by Tyr-43, Gly-45, and Gly-47. His-63 is a catalytic residue. Asp-64 contacts Ca(2+). Asp-105 is a catalytic residue.

This sequence belongs to the phospholipase A2 family. Group II subfamily. D49 sub-subfamily. It depends on Ca(2+) as a cofactor. Expressed by the venom gland.

It is found in the secreted. It catalyses the reaction a 1,2-diacyl-sn-glycero-3-phosphocholine + H2O = a 1-acyl-sn-glycero-3-phosphocholine + a fatty acid + H(+). Snake venom phospholipase A2 (PLA2) that is neurotoxic. PLA2 catalyzes the calcium-dependent hydrolysis of the 2-acyl groups in 3-sn-phosphoglycerides. In Daboia siamensis (Eastern Russel's viper), this protein is Basic phospholipase A2 DsM-S1.